Consider the following 1240-residue polypeptide: ABC transporter B family member 17 (1240 aa).

In terms of domain architecture, ABC transmembrane type-1 1 spans 35–324 (MALGLIGAVG…SLSNLKYFSE (290 aa)). The helical transmembrane segment at 36–56 (ALGLIGAVGDGFITPVVVFIF) threads the bilayer. An N-linked (GlcNAc...) asparagine glycan is attached at Asn-70. 5 helical membrane-spanning segments follow: residues 81-101 (VVAL…EGYC), 158-180 (LPNF…ILMW), 184-206 (IVGF…ALVS), 264-284 (GITI…TWYG), and 296-316 (GTVF…GQSL). The region spanning 359-595 (VEFNHVKFTY…IDGQYTSLVS (237 aa)) is the ABC transporter 1 domain. An ATP-binding site is contributed by 394–401 (GGSGSGKS). N-linked (GlcNAc...) asparagine glycans are attached at residues Asn-542, Asn-609, and Asn-642. Positions 672–960 (ALYGCLSAAL…AGTMTTDLAR (289 aa)) constitute an ABC transmembrane type-1 2 domain. The next 2 membrane-spanning stretches (helical) occupy residues 681-701 (LVGV…SVFF) and 714-734 (IYVL…ISQH). Residue Asn-769 is glycosylated (N-linked (GlcNAc...) asparagine). Transmembrane regions (helical) follow at residues 793–815 (MSLL…VIAW), 817–839 (LAIV…RVLL), 896–919 (WLAG…NFWY), and 923–943 (LIAD…IFVT). Residues 995–1233 (ITFLNVDFAY…GPTGTYFSLA (239 aa)) enclose the ABC transporter 2 domain. N-linked (GlcNAc...) asparagine glycosylation is present at Asn-1015. ATP is bound at residue 1030-1037 (GTSGSGKS).

Belongs to the ABC transporter superfamily. ABCB family. Multidrug resistance exporter (TC 3.A.1.201) subfamily.

It localises to the membrane. The protein is ABC transporter B family member 17 (ABCB17) of Arabidopsis thaliana (Mouse-ear cress).